Consider the following 883-residue polypeptide: MTSASSMSVSVECVNICNLTKGDGNARSDCSALSCAWKAPRALTGFLASTAHPPVCSVYSCGRNGRKSRMKACAWQRYEYEVGFSEAPYFVNVRNILKSRLSCGGHKRWELYCVSAESSSGASSDVTVETLWEDLFPSISYLPRKELEFVQKGLKLAFEAHHGQKRRSGEPFIIHPVAVARILGELELDWESIVAGLLHDTVEDTNFITFEKIEEEFGATVRHIVEGETKVSKLGKLKCKTESETIQDVKADDLRQMFLAMTDEVRVIIVKLADRLHNMRTLCHMPPHKQSSIAGETLQVFAPLAKLLGMYSIKSELENLSFMYVSAEDYDRVTSRIANLYKEHEKELTEANRILVKKIEDDQFLDLVTVNTDVRSVCKETYSIYKAALKSKGSINDYNQIAQLRIVVKPKPSVGVGPLCSPQQICYHVLGLVHEIWKPIPRTVKDYIATPKPNGYQSLHTTVIPFLYESMFRLEVQIRTEEMDLIAERGIAVYYNGKSLSTGLVGNAVPLGRNSRGKTGCLNNADFALRVGWLNAIREWQEEFVGNMSSREFVDTITRDLLGSRVFVFTPKGEIKNLPKGATVVDYAYLIHTEIGNKMVAAKVNGNLVSPTHVLENAEVVEIVTYNALSSKSAFQRHKQWLQHAKTRSARHKIMRFLREQAAQCAAEITQDQVNDFVADSDSDVEDLTEDSRKSLQWWEKILVNVKQFQSQDKSRDTTPAPQNGSVWAPKVNGKHNKAIKNSSSDEPEFLLPGDGIARILPANIPAYKEVLPGLDSWRDSKIATWHHLEGQSIEWLCVVSMDRKGIIAEVTTVLAAEGIALCSCVAEIDRGRGLAVMLFQIEANIESLVSVCAKVDLVLGVLGWSSGCSWPRSTENAQVLEC.

The N-terminal 55 residues, 1 to 55 (MTSASSMSVSVECVNICNLTKGDGNARSDCSALSCAWKAPRALTGFLASTAHPPV), are a transit peptide targeting the chloroplast. In terms of domain architecture, HD spans 172 to 279 (FIIHPVAVAR…VKLADRLHNM (108 aa)). The region spanning 562-625 (LGSRVFVFTP…ENAEVVEIVT (64 aa)) is the TGS domain. Over residues 710–726 (QSQDKSRDTTPAPQNGS) the composition is skewed to polar residues. A disordered region spans residues 710 to 746 (QSQDKSRDTTPAPQNGSVWAPKVNGKHNKAIKNSSSD). The region spanning 796–867 (WLCVVSMDRK…LVLGVLGWSS (72 aa)) is the ACT domain.

It belongs to the RelA/SpoT family. Interacts with RPP5.

It is found in the plastid. The protein localises to the chloroplast. The enzyme catalyses GTP + ATP = guanosine 3'-diphosphate 5'-triphosphate + AMP. In terms of biological role, may be involved in a rapid plant ppGpp (guanosine 3'-diphosphate 5'-diphosphate)-mediated response to pathogens and other stresses. The chain is Putative GTP diphosphokinase RSH1, chloroplastic (RSH1) from Arabidopsis thaliana (Mouse-ear cress).